The sequence spans 379 residues: Mannan endo-1,4-beta-mannosidase 7 (379 aa).

Positions 64 and 179 each coordinate substrate. Glu180 acts as the Proton donor in catalysis. Tyr260 contributes to the substrate binding site. The active-site Nucleophile is the Glu300. Position 342 (Trp342) interacts with substrate.

This sequence belongs to the glycosyl hydrolase 5 (cellulase A) family. Expression not detected.

The enzyme catalyses Random hydrolysis of (1-&gt;4)-beta-D-mannosidic linkages in mannans, galactomannans and glucomannans.. The chain is Mannan endo-1,4-beta-mannosidase 7 (MAN7) from Oryza sativa subsp. japonica (Rice).